The following is a 227-amino-acid chain: Urease accessory protein UreF 2 (227 aa).

The protein belongs to the UreF family. As to quaternary structure, ureD, UreF and UreG form a complex that acts as a GTP-hydrolysis-dependent molecular chaperone, activating the urease apoprotein by helping to assemble the nickel containing metallocenter of UreC. The UreE protein probably delivers the nickel.

It is found in the cytoplasm. Functionally, required for maturation of urease via the functional incorporation of the urease nickel metallocenter. This Brucella anthropi (strain ATCC 49188 / DSM 6882 / CCUG 24695 / JCM 21032 / LMG 3331 / NBRC 15819 / NCTC 12168 / Alc 37) (Ochrobactrum anthropi) protein is Urease accessory protein UreF 2.